A 251-amino-acid chain; its full sequence is POU class 2 homeobox associating factor 3 (251 aa).

Residues 5 to 27 form the OCA domain; sequence PKVYQGVRVKITVKELLQQRRAH. The tract at residues 24–45 is disordered; that stretch reads RRAHQAASGGTRSGGSSVHLSD. Over residues 31-40 the composition is skewed to low complexity; sequence SGGTRSGGSS.

It belongs to the POU2AF family. As to quaternary structure, interacts with POU2F3 in a DNA-dependent manner; this interaction increases POU2F3 transactivation activity. As to expression, expressed in many cell types of epithelial, mesenchymal and hematopoietic origins. Expressed in tufs cells.

It is found in the cytoplasm. The protein localises to the nucleus. In terms of biological role, transcriptional coactivator that specifically associates with POU2F3. This complex drives the development of tuft cells, a rare a rare chemosensory cells that coordinate immune and neural functions within mucosal epithelial tissues. This is POU class 2 homeobox associating factor 3 from Homo sapiens (Human).